The sequence spans 280 residues: Urease accessory protein UreD 3 (280 aa).

Belongs to the UreD family. In terms of assembly, ureD, UreF and UreG form a complex that acts as a GTP-hydrolysis-dependent molecular chaperone, activating the urease apoprotein by helping to assemble the nickel containing metallocenter of UreC. The UreE protein probably delivers the nickel.

It is found in the cytoplasm. Its function is as follows. Required for maturation of urease via the functional incorporation of the urease nickel metallocenter. In Bradyrhizobium sp. (strain ORS 278), this protein is Urease accessory protein UreD 3.